The chain runs to 169 residues: Peptide deformylase 1 (169 aa).

2 residues coordinate Fe cation: C91 and H133. E134 is a catalytic residue. H137 contributes to the Fe cation binding site.

It belongs to the polypeptide deformylase family. The cofactor is Fe(2+).

The enzyme catalyses N-terminal N-formyl-L-methionyl-[peptide] + H2O = N-terminal L-methionyl-[peptide] + formate. Removes the formyl group from the N-terminal Met of newly synthesized proteins. Requires at least a dipeptide for an efficient rate of reaction. N-terminal L-methionine is a prerequisite for activity but the enzyme has broad specificity at other positions. The protein is Peptide deformylase 1 of Vibrio cholerae serotype O1 (strain ATCC 39315 / El Tor Inaba N16961).